A 240-amino-acid chain; its full sequence is EF-hand domain-containing protein D2 (240 aa).

Residue A2 is modified to N-acetylalanine. S11 is subject to Phosphoserine. The tract at residues 13 to 38 (RLQMEGEGGGETPEQPGLNGAAAAAA) is disordered. 2 positions are modified to phosphoserine: S74 and S76. Y83 is modified (phosphotyrosine). 2 EF-hand domains span residues 92–127 (KQIKDMEKMFKQYDAGRDGFIDLMELKLMMEKLGAP) and 128–163 (QTHLGLKNMIKEVDEDFDSKLSFREFLLIFRKAAAG). 8 residues coordinate Ca(2+): D105, D109, E116, D141, D143, D145, K147, and E152. The residue at position 233 (K233) is an N6-acetyllysine.

In terms of assembly, interacts with CASP9; with inactive form. In terms of tissue distribution, found in lymphocytes; preferentially expressed in CD8+ cells.

It localises to the membrane raft. Its function is as follows. May regulate B-cell receptor (BCR)-induced immature and primary B-cell apoptosis. Plays a role as negative regulator of the canonical NF-kappa-B-activating branch. Controls spontaneous apoptosis through the regulation of BCL2L1 abundance. The sequence is that of EF-hand domain-containing protein D2 (EFHD2) from Homo sapiens (Human).